A 227-amino-acid chain; its full sequence is Nitrobenzene nitroreductase (227 aa).

An FMN-binding site is contributed by 14–18; the sequence is RRAKR. Positions 44 and 109 each coordinate NADP(+). Residues 172–173 and K215 contribute to the FMN site; that span reads VF.

The protein belongs to the nitroreductase family. In terms of assembly, monomer. FMN serves as cofactor.

It catalyses the reaction N-phenylhydroxylamine + 2 NADP(+) + H2O = nitrobenzene + 2 NADPH + 2 H(+). It functions in the pathway xenobiotic degradation; nitrobenzene degradation. Inhibited by dicumarol, p-hydroxymercuribenzoate and salicyl hydroxamate. In terms of biological role, involved in the biodegradation of nitroaromatic compounds. Catalyzes the two-electron reduction of nitrobenzene (NB) to produce a nitrosobenzene (NOB) intermediate, which is immediately reduced to hydroxylaminobenzene (HAB) by a second two-electron transfer. Also active on menadione and nitrofurazone. Replacing NADPH with NADH results in a 4-fold decrease in the reaction rate. The sequence is that of Nitrobenzene nitroreductase from Ectopseudomonas oleovorans (Pseudomonas oleovorans).